The following is a 313-amino-acid chain: tRNA-cytidine(32) 2-sulfurtransferase (313 aa).

Positions 60–65 (SGGKDS) match the PP-loop motif motif. [4Fe-4S] cluster contacts are provided by C135, C138, and C226.

Belongs to the TtcA family. In terms of assembly, homodimer. Requires Mg(2+) as cofactor. It depends on [4Fe-4S] cluster as a cofactor.

The protein localises to the cytoplasm. It catalyses the reaction cytidine(32) in tRNA + S-sulfanyl-L-cysteinyl-[cysteine desulfurase] + AH2 + ATP = 2-thiocytidine(32) in tRNA + L-cysteinyl-[cysteine desulfurase] + A + AMP + diphosphate + H(+). Its pathway is tRNA modification. In terms of biological role, catalyzes the ATP-dependent 2-thiolation of cytidine in position 32 of tRNA, to form 2-thiocytidine (s(2)C32). The sulfur atoms are provided by the cysteine/cysteine desulfurase (IscS) system. The sequence is that of tRNA-cytidine(32) 2-sulfurtransferase from Delftia acidovorans (strain DSM 14801 / SPH-1).